The chain runs to 407 residues: Accessory Sec system protein translocase subunit SecY2 (407 aa).

The next 10 helical transmembrane spans lie at 22-42, 68-88, 108-128, 136-156, 169-189, 191-211, 245-265, 280-300, 343-363, and 366-386; these read IAFTILILLIYILGSKITIVD, LNVFSLGLGPWLTAMIIISLI, EKFLTLGLSIIQGYFVINQFV, FTELLLLLILVTGAMLMMWLA, PIVLLSVIKSMFTQSLPIVSI, ILMLVVMVILIIVALFILLLT, ISIMISLSVFLLLTSTINLIF, FGHYMGVTIYLILQTVLGYLL, WFGTTIVTAIIGVPLYISLLV, and LSEYIYFAVQLMIMVYLAMNI.

It belongs to the SecY/SEC61-alpha family. SecY2 subfamily. As to quaternary structure, component of the accessory SecA2/SecY2 protein translocase complex required to export cell wall proteins. May form heterotrimers with SecE and SecG subunits.

The protein resides in the cell membrane. Part of the accessory SecA2/SecY2 system specifically required for export of possible cell wall proteins. The central subunit of a protein translocation channel. In Staphylococcus pseudintermedius (strain ED99), this protein is Accessory Sec system protein translocase subunit SecY2.